A 408-amino-acid polypeptide reads, in one-letter code: Probable serine/threonine-protein kinase PBL16 (408 aa).

Gly2 carries the N-myristoyl glycine lipid modification. Cys4 carries the S-palmitoyl cysteine lipid modification. Positions 17-50 (ANAKSESPKEQSPTVEDKHIKEVQKLPSNPKEVE) are disordered. Polar residues predominate over residues 18–30 (NAKSESPKEQSPT). Residues 31–40 (VEDKHIKEVQ) show a composition bias toward basic and acidic residues. The residue at position 65 (Thr65) is a Phosphothreonine. In terms of domain architecture, Protein kinase spans 76 to 360 (FRQDRVLGGG…DIVDSLEPLQ (285 aa)). Residues 82-90 (LGGGGFGSV) and Lys113 contribute to the ATP site. Tyr159 is subject to Phosphotyrosine. Asp209 (proton acceptor) is an active-site residue. A phosphoserine mark is found at Ser213 and Ser243. Thr244 and Thr249 each carry phosphothreonine. At Tyr257 the chain carries Phosphotyrosine.

This sequence belongs to the protein kinase superfamily. Ser/Thr protein kinase family. In terms of processing, palmitoylation at Cys-4 and Cys-6 are required for plasma membrane location.

It is found in the cell membrane. The catalysed reaction is L-seryl-[protein] + ATP = O-phospho-L-seryl-[protein] + ADP + H(+). It carries out the reaction L-threonyl-[protein] + ATP = O-phospho-L-threonyl-[protein] + ADP + H(+). In terms of biological role, may be involved in plant defense signaling. The chain is Probable serine/threonine-protein kinase PBL16 from Arabidopsis thaliana (Mouse-ear cress).